We begin with the raw amino-acid sequence, 405 residues long: Bone morphogenetic protein 4 (405 aa).

The signal sequence occupies residues 1–19 (MIPGNRMLMVILLCQVLLG). A propeptide spanning residues 20-291 (GTNHASLIPE…GHALTRRARR (272 aa)) is cleaved from the precursor. N-linked (GlcNAc...) asparagine glycosylation is found at Asn144, Asn208, Asn347, and Asn362. Intrachain disulfides connect Cys305–Cys370, Cys334–Cys402, and Cys338–Cys404.

This sequence belongs to the TGF-beta family. As to quaternary structure, homodimer; disulfide-linked. Part of a complex consisting of TWSG1 and CHRD. Forms a ternary complex with chordin/CHRD and TSKU.

It localises to the secreted. Functionally, negatively regulates the structure and function of the limb apical ectodermal ridge. This chain is Bone morphogenetic protein 4 (BMP4), found in Gallus gallus (Chicken).